The primary structure comprises 594 residues: Zinc finger protein 703 (594 aa).

Over residues 1-14 (MSDSPAGSNPRTPE) the composition is skewed to polar residues. Disordered stretches follow at residues 1-37 (MSDS…VPAV), 100-298 (TCSQ…GHVA), and 345-370 (LVGG…LTGA). Serine 2 carries the post-translational modification N-acetylserine. Residues 17-30 (GSGGGSSSGGGGGK) show a composition bias toward gly residues. 3 stretches are compositionally biased toward low complexity: residues 134–145 (RSAPGAASAAAA), 177–191 (GSSS…SSSS), and 212–225 (GASV…SSPG). Basic and acidic residues predominate over residues 246–256 (ELDKKEQEAKP). Serine 257 is modified (phosphoserine). Positions 345–356 (LVGGQLSGGLGL) are enriched in gly residues. The segment at 460–488 (HSCNWVAASGPCDKRFATSEELLSHLRTH) adopts a C2H2-type zinc-finger fold. Arginine 584 carries the post-translational modification Omega-N-methylarginine.

Belongs to the Elbow/Noc family. Interacts with DCAF7 and PHB2. Interacts with TLE4; increases transcriptional repression. Expressed in mammary epithelium.

Its subcellular location is the nucleus. The protein resides in the cytoplasm. Transcriptional corepressor which does not bind directly to DNA and may regulate transcription through recruitment of histone deacetylases to gene promoters. Regulates cell adhesion, migration and proliferation. May be required for segmental gene expression during hindbrain development. This is Zinc finger protein 703 (Znf703) from Mus musculus (Mouse).